The sequence spans 304 residues: Lipid droplet-associated hydrolase (304 aa).

The active-site Nucleophile is the serine 119. Catalysis depends on charge relay system residues aspartate 250 and histidine 279.

This sequence belongs to the AB hydrolase superfamily. LDAH family.

It localises to the lipid droplet. It carries out the reaction a cholesterol ester + H2O = cholesterol + a fatty acid + H(+). In terms of biological role, probable serine lipid hydrolase associated with lipid droplets. Has low cholesterol esterase activity. Appears to lack triglyceride lipase activity. Involved in cholesterol and triglyceride homeostasis; stimulates cellular triglyceride accumulation and cellular cholesterol release. This is Lipid droplet-associated hydrolase from Dictyostelium discoideum (Social amoeba).